We begin with the raw amino-acid sequence, 493 residues long: Chaperone SurA (493 aa).

Residues 1–33 form the signal peptide; sequence MKRQAFSLLSRLNPWQQLLLSAVLVTLAAPAAA. A disordered region spans residues 46 to 76; sequence FTQQGSQSASQGSTVAPSQPMMGVPQPSSQP. The segment covering 48–58 has biased composition (low complexity); that stretch reads QQGSQSASQGS. 2 PpiC domains span residues 230-332 and 346-444; these read PTEF…KLVS and IAQT…QVEN.

Its subcellular location is the periplasm. The enzyme catalyses [protein]-peptidylproline (omega=180) = [protein]-peptidylproline (omega=0). Chaperone involved in the correct folding and assembly of outer membrane proteins. Recognizes specific patterns of aromatic residues and the orientation of their side chains, which are found more frequently in integral outer membrane proteins. May act in both early periplasmic and late outer membrane-associated steps of protein maturation. In Cupriavidus metallidurans (strain ATCC 43123 / DSM 2839 / NBRC 102507 / CH34) (Ralstonia metallidurans), this protein is Chaperone SurA.